A 698-amino-acid polypeptide reads, in one-letter code: Phenylalanine aminomutase (L-beta-phenylalanine forming) (698 aa).

Residue Tyr80 is the Proton donor/acceptor of the active site. A cross-link (5-imidazolinone (Ala-Gly)) is located at residues 175–177 (ASG). Ser176 carries the post-translational modification 2,3-didehydroalanine (Ser). (E)-cinnamate is bound by residues Asn231, Gln319, Arg325, Asn355, Lys427, Glu455, and Asn458.

The protein belongs to the PAL/histidase family. Homotetramer. Post-translationally, contains an active site 4-methylidene-imidazol-5-one (MIO), which is formed autocatalytically by cyclization and dehydration of residues Ala-Ser-Gly.

The protein resides in the cytoplasm. It carries out the reaction L-phenylalanine = L-beta-phenylalanine. The catalysed reaction is L-phenylalanine = (E)-cinnamate + NH4(+). Its pathway is alkaloid biosynthesis; taxol biosynthesis. It participates in phenylpropanoid metabolism; trans-cinnamate biosynthesis; trans-cinnamate from L-phenylalanine: step 1/1. Phenylalanine aminomutase that catalyzes the rearrangement of L-phenylalanine to R-beta-phenylalanine. Catalyzes the first committed step in the biosynthesis of the side chain of the alkaloid taxol (paclitaxel), a widely-used compound with antitumor activity. Also has low phenylalanine ammonia-lyase activity. This is Phenylalanine aminomutase (L-beta-phenylalanine forming) (pam) from Taxus canadensis (Canadian yew).